Here is a 302-residue protein sequence, read N- to C-terminus: MNENSRLHTHSNIRNTFFSEIGIGISGNSFLLLFHIIKFFRGHRPRLTDLPIGLLSLIHLLMLLVAAVIATDIFISWRGWNDIICKFLVYLYRSLRGLSLCTTSMLSVLQAIILSPRSYCLAKFKRKSSHNISCAIIFLSVLYMSISSHLLISITATPNLTMNDFLYVSQSCSLLPLSYLMQSIYSTLLVLREVFLIGLMVLSTSYMVALLYMHRKQAQNLQGTSLSLKASAEQRATQTILMLMTFFVLMSIFDSIVSCSRTMFLDDPTSYSIHIFVMHIYATVSPFVFISTEKHIVNILRG.

The Extracellular segment spans residues 1–16; the sequence is MNENSRLHTHSNIRNT. Residues 17-37 form a helical membrane-spanning segment; that stretch reads FFSEIGIGISGNSFLLLFHII. Residues 38-49 lie on the Cytoplasmic side of the membrane; the sequence is KFFRGHRPRLTD. Residues 50–70 traverse the membrane as a helical segment; sequence LPIGLLSLIHLLMLLVAAVIA. Residues 71–91 are Extracellular-facing; it reads TDIFISWRGWNDIICKFLVYL. A disulfide bridge connects residues Cys-85 and Cys-172. A helical transmembrane segment spans residues 92–114; sequence YRSLRGLSLCTTSMLSVLQAIIL. The Cytoplasmic portion of the chain corresponds to 115-131; it reads SPRSYCLAKFKRKSSHN. The helical transmembrane segment at 132-152 threads the bilayer; that stretch reads ISCAIIFLSVLYMSISSHLLI. Over 153 to 193 the chain is Extracellular; the sequence is SITATPNLTMNDFLYVSQSCSLLPLSYLMQSIYSTLLVLRE. N-linked (GlcNAc...) asparagine glycosylation is present at Asn-159. A helical transmembrane segment spans residues 194–214; that stretch reads VFLIGLMVLSTSYMVALLYMH. The Cytoplasmic segment spans residues 215-238; that stretch reads RKQAQNLQGTSLSLKASAEQRATQ. A helical membrane pass occupies residues 239–259; it reads TILMLMTFFVLMSIFDSIVSC. Residues 260–269 lie on the Extracellular side of the membrane; sequence SRTMFLDDPT. A helical transmembrane segment spans residues 270 to 290; it reads SYSIHIFVMHIYATVSPFVFI. Residues 291–302 lie on the Cytoplasmic side of the membrane; it reads STEKHIVNILRG.

The protein belongs to the G-protein coupled receptor 1 family.

The protein localises to the cell membrane. In terms of biological role, putative pheromone receptor implicated in the regulation of social and reproductive behavior. The sequence is that of Vomeronasal type-1 receptor 48 (Vmn1r48) from Mus musculus (Mouse).